A 580-amino-acid chain; its full sequence is Sensor histidine kinase YvrG (580 aa).

Topologically, residues 1 to 6 (MRLRWK) are cytoplasmic. A helical membrane pass occupies residues 7–27 (FLFHFFGQMLIVILLLTVMLV). Over 28 to 261 (ASFFYLDARF…KSFLKVVLKA (234 aa)) the chain is Extracellular. The chain crosses the membrane as a helical span at residues 262–282 (MFLVMAVLFMYIIWMTVWYMF). At 283 to 580 (RFGLPIFHTI…TVITILFKKQ (298 aa)) the chain is on the cytoplasmic side. One can recognise a Histidine kinase domain in the interval 363–580 (GLSHDLKTPL…TVITILFKKQ (218 aa)). Phosphohistidine; by autocatalysis is present on histidine 366.

Its subcellular location is the cell membrane. The catalysed reaction is ATP + protein L-histidine = ADP + protein N-phospho-L-histidine.. Functionally, member of the two-component regulatory system YvrG/YvrH that positively regulates 7 transcriptional units (wprA, wapA-yxxG, dltABCDE, sunA, sunT-bdbA-yolJ-bdbB, sigO-rsoA, and sigX-rsiX), and negatively regulates the lytABC operon. Probably activates YvrH by phosphorylation. The sequence is that of Sensor histidine kinase YvrG (yvrG) from Bacillus subtilis (strain 168).